We begin with the raw amino-acid sequence, 785 residues long: MTAAKDRILELRAELDQHNYRYHVLDEPSIPDAEYDRLFHELKALEAANPELITSDSPTQRVGSVALTAFTQVRHEVPMLSLGNAFEETDMREFDRRVTEGLDLPAGDLFGGGAAVEYSCEPKLDGLAVSLLYQDGVLVRGATRGDGTTGEDISVNVRTVRNIPLKLHGTGWPATLEVRGEVFMSKAGFERLNASQLEVGGKTFANPRNAAAGSLRQLDSKITANRPLEFCCYGIGQVSHDISDTHIGNLQQLKAWGMPISHELKLAKGIGECLDYYRDIGERRNSLAYEIDGVVFKVNSIADQRELGFRAREPRWAIAHKFPAMEELTELLDVEFQVGRTGAVTPVARLKPVKVAGVTVANATLHNMDEVARLGLMIGDTVIIRRAGDVIPQVVQVVMERRPEDARPVQIPESCPVCGSHVERTQLVKRSKGKETISEGAVYRCVGRLACGAQLKQAIIHFVSRRAMDIEGLGDKSVEQLVDEGLVSSPADLYALKFEDIVDLEGFAEVSSNKLLAAIEDSKKPGLARFIYALGIPDVGEETAKVLARSLGSLERVQQALPQVLTYLPDIGLEVAHEIHSFFEDAHNRQVITELLGHGLQIQDQGELGAEFAASTTLGGFLDKLHIPSVGPGGAQKLADKFESLEGVMNADWLDMRQALPEKQANSVREFFALPEHRQLAEDAEKQLRDFGMHWQSEKKVVEGLPLAGETWVLTGKVELMSRDVAKEHLESLGAKVAGSVSAKTHCVVAGPGAGSKLTKANELGVKVMDEEAFIAFLKGHGISA.

NAD(+) contacts are provided by residues 32 to 36 (DAEYD), 81 to 82 (SL), and Glu121. Lys123 acts as the N6-AMP-lysine intermediate in catalysis. NAD(+) is bound by residues Arg144, Glu181, Lys297, and Lys321. Zn(2+) contacts are provided by Cys415, Cys418, Cys445, and Cys451. Residues 702 to 785 (VEGLPLAGET…AFLKGHGISA (84 aa)) form the BRCT domain.

It belongs to the NAD-dependent DNA ligase family. LigA subfamily. Mg(2+) is required as a cofactor. It depends on Mn(2+) as a cofactor.

It catalyses the reaction NAD(+) + (deoxyribonucleotide)n-3'-hydroxyl + 5'-phospho-(deoxyribonucleotide)m = (deoxyribonucleotide)n+m + AMP + beta-nicotinamide D-nucleotide.. In terms of biological role, DNA ligase that catalyzes the formation of phosphodiester linkages between 5'-phosphoryl and 3'-hydroxyl groups in double-stranded DNA using NAD as a coenzyme and as the energy source for the reaction. It is essential for DNA replication and repair of damaged DNA. In Pseudomonas fluorescens (strain Pf0-1), this protein is DNA ligase.